Here is a 1522-residue protein sequence, read N- to C-terminus: Lysine-specific demethylase 5B (1522 aa).

In terms of domain architecture, JmjN spans 10–51 (CPVFEPSWEEFADPFAFIHKIRPIAEQTGICKVRPPPDWQPP). The ARID domain maps to 75 to 165 (TRVKLNFLDQ…ILYPYNLFQS (91 aa)). The segment covering 180–192 (DTKDKEYKPHDIP) has biased composition (basic and acidic residues). The segment at 180 to 229 (DTKDKEYKPHDIPQRQSVQPSESCPPARRAKRLRAEATNIKTESDSPEVR) is disordered. A PHD-type 1 zinc finger spans residues 284–334 (LYVCLLCGSGNDEDRLLLCDGCDDSYHTFCLIPPLHDVPKGDWRCPQCLAQ). A 2-oxoglutarate-binding site is contributed by Tyr400. Residues 428–594 (EYLDSGWNLN…LGRQCIEHYR (167 aa)) enclose the JmjC domain. 2 residues coordinate Fe cation: His474 and Glu476. Residues Ser482, Asn484, and Lys492 each coordinate 2-oxoglutarate. His562 is a binding site for Fe cation. The segment at 667–719 (CYKCKTTCFMSAVYCPCKPGLLVCLYHVEDLCSCPTYQYKLGYRYTLEELYPM) adopts a C5HC2 zinc-finger fold. Residues 1151–1199 (LKVCVCQKEPAAPMIQCELCRGFFHTGCVSVPHALQGPRVWLCPQCRRS) form a PHD-type 2 zinc finger. Positions 1353 to 1365 (LQAEQKPSVGPSN) are enriched in polar residues. Disordered regions lie at residues 1353-1373 (LQAE…CCRG) and 1400-1460 (ARVR…DSED). Basic residues predominate over residues 1400 to 1416 (ARVRKMRTPKKKKLKLS). The span at 1426-1442 (RMERERERLLEAQRSSE) shows a compositional bias: basic and acidic residues. The PHD-type 3 zinc-finger motif lies at 1462–1516 (DAICPAVTCLQPEGEEVDWVQCDGSCNQWFHQVCVGISPEMAEKEDYICASCAGK).

The protein belongs to the JARID1 histone demethylase family. Fe(2+) is required as a cofactor.

The protein resides in the nucleus. It catalyses the reaction N(6),N(6),N(6)-trimethyl-L-lysyl(4)-[histone H3] + 3 2-oxoglutarate + 3 O2 = L-lysyl(4)-[histone H3] + 3 formaldehyde + 3 succinate + 3 CO2. Histone demethylase that demethylates 'Lys-4' of histone H3, thereby playing a central role in histone code. Does not demethylate histone H3 'Lys-9' or H3 'Lys-27'. Demethylates trimethylated, dimethylated and monomethylated H3 'Lys-4'. Acts as a transcriptional corepressor. May repress the CLOCK-BMAL1 heterodimer-mediated transcriptional activation of the core clock component PER2. This is Lysine-specific demethylase 5B (KDM5B) from Gallus gallus (Chicken).